The chain runs to 87 residues: ParB-like nuclease domain-containing protein YnaK (87 aa).

This chain is ParB-like nuclease domain-containing protein YnaK (ynaK), found in Escherichia coli (strain K12).